The chain runs to 118 residues: Small ribosomal subunit protein uS13 (118 aa).

Residues glycine 94–lysine 118 form a disordered region.

Belongs to the universal ribosomal protein uS13 family. As to quaternary structure, part of the 30S ribosomal subunit. Forms a loose heterodimer with protein S19. Forms two bridges to the 50S subunit in the 70S ribosome.

Located at the top of the head of the 30S subunit, it contacts several helices of the 16S rRNA. In the 70S ribosome it contacts the 23S rRNA (bridge B1a) and protein L5 of the 50S subunit (bridge B1b), connecting the 2 subunits; these bridges are implicated in subunit movement. Contacts the tRNAs in the A and P-sites. The protein is Small ribosomal subunit protein uS13 of Shigella dysenteriae serotype 1 (strain Sd197).